The sequence spans 403 residues: Aromatic-L-amino-acid decarboxylase (403 aa).

Residue Thr-8 coordinates substrate. Pyridoxal 5'-phosphate contacts are provided by Ala-74 and Ser-75. His-118 serves as a coordination point for substrate. His-118 is a catalytic residue. The pyridoxal 5'-phosphate site is built by Asp-197 and Asn-226. Lys-229 carries the N6-(pyridoxal phosphate)lysine modification. The segment at 250 to 276 (NAFNVDPLYLKHDMQGSAPDYRHWQIP) is disordered.

The protein belongs to the group II decarboxylase family. Homodimer. Pyridoxal 5'-phosphate serves as cofactor.

The catalysed reaction is L-dopa + H(+) = dopamine + CO2. It catalyses the reaction 5-hydroxy-L-tryptophan + H(+) = serotonin + CO2. Catalyzes the decarboxylation of L-3,4-dihydroxyphenylalanine (L-DOPA) to dopamine and L-5-hydroxytryptophan (5-HTP) to serotonin. Catalyzes the formation of serotonin more efficiently than dopamine. Displays no activity to tyrosine. Variation in the synthesis of bioamines may be a factor contributing to natural variation in life span. This is Aromatic-L-amino-acid decarboxylase (Ddc) from Drosophila lebanonensis (Fruit fly).